A 188-amino-acid polypeptide reads, in one-letter code: Elongation factor P 1 (188 aa).

Belongs to the elongation factor P family.

It is found in the cytoplasm. The protein operates within protein biosynthesis; polypeptide chain elongation. Its function is as follows. Involved in peptide bond synthesis. Stimulates efficient translation and peptide-bond synthesis on native or reconstituted 70S ribosomes in vitro. Probably functions indirectly by altering the affinity of the ribosome for aminoacyl-tRNA, thus increasing their reactivity as acceptors for peptidyl transferase. The polypeptide is Elongation factor P 1 (efp1) (Porphyromonas gingivalis (strain ATCC BAA-308 / W83)).